The primary structure comprises 150 residues: UPF0756 membrane protein HI_1074 (150 aa).

4 helical membrane-spanning segments follow: residues 1 to 21, 52 to 72, 81 to 101, and 123 to 143; these read MTLQLNTIALLLVILLILGVL, YGVKIGIIILTIGVLSPLVSG, GFLSWKMALSISVGVLVAWLA, and IIGVAFLGGIPVGPLIAAGIL.

The protein belongs to the UPF0756 family.

Its subcellular location is the cell membrane. This Haemophilus influenzae (strain ATCC 51907 / DSM 11121 / KW20 / Rd) protein is UPF0756 membrane protein HI_1074.